Here is a 1259-residue protein sequence, read N- to C-terminus: Clustered mitochondria protein homolog (1259 aa).

Positions 1–27 are enriched in polar residues; it reads MSQTNGNMEHSKETPQSQEVEQLTNGN. The interval 1 to 38 is disordered; it reads MSQTNGNMEHSKETPQSQEVEQLTNGNHPEEQQEEEEN. The Clu domain occupies 324-568; it reads DITRSQESYL…RVTPLDVMWQ (245 aa). 2 stretches are compositionally biased toward basic and acidic residues: residues 612 to 628 and 634 to 647; these read AEAE…SKEQ and TEEK…QERV. 2 disordered regions span residues 612-647 and 881-908; these read AEAE…QERV and VVNG…PSRA. TPR repeat units lie at residues 982-1015, 1024-1057, and 1066-1099; these read AKLY…TERT, ILAY…WKII, and ITTM…CESL. Disordered stretches follow at residues 1192 to 1215 and 1229 to 1259; these read TKVQ…ANAS and EGGD…KSSA.

It belongs to the CLU family. In terms of assembly, may associate with the eukaryotic translation initiation factor 3 (eIF-3) complex.

Its subcellular location is the cytoplasm. MRNA-binding protein involved in proper cytoplasmic distribution of mitochondria. The sequence is that of Clustered mitochondria protein homolog from Aspergillus clavatus (strain ATCC 1007 / CBS 513.65 / DSM 816 / NCTC 3887 / NRRL 1 / QM 1276 / 107).